The primary structure comprises 300 residues: Sporulation protein SPS18 (300 aa).

Residues 11–130 (ENRKRLLRAK…LANEVRSNDI (120 aa)) enclose the Arf-GAP domain. The C4-type zinc finger occupies 28–51 (CFECKSVNPQFVSCSFGIFICVNC).

The polypeptide is Sporulation protein SPS18 (SPS18) (Saccharomyces cerevisiae (strain ATCC 204508 / S288c) (Baker's yeast)).